The following is a 392-amino-acid chain: Cyclic di-GMP phosphodiesterase RocR (392 aa).

The region spanning 5-126 is the Response regulatory domain; sequence NVLVLEDEPF…RITALLTRYN (122 aa). Aspartate 56 carries the 4-aspartylphosphate modification. Positions 140–392 constitute an EAL domain; that stretch reads ELPSVADVVR…QHFLDYCSGS (253 aa). Mg(2+) contacts are provided by glutamate 175, asparagine 233, glutamate 265, and aspartate 295. The Proton acceptor role is filled by glutamate 352.

Homotetramer. Exhibits a highly unusual tetrameric structure arranged around a single dyad, with the four subunits adopting two distinctly different conformations, with only two active sites accessible for substrate binding. Interacts with RocS1. The cofactor is Mg(2+).

The enzyme catalyses 3',3'-c-di-GMP + H2O = 5'-phosphoguanylyl(3'-&gt;5')guanosine + H(+). Its activity is regulated as follows. Phosphorylation of Asp-56 probably induces local conformational changes in the response regulatory domain. These structural changes are transmitted to the adjacent EAL domain, then the signal is further transmitted down to the active site. The phosphodiesterase activity is inhibited by Ca(2+) and Zn(2+). Phosphodiesterase activity is inhibited by a benzoisothiazolinone derivative that specifically inhibited RocR, but not some other phosphodiesterases. Phosphodiesterase (PDE) that catalyzes the hydrolysis of cyclic diguanylate (c-di-GMP) to 5'-pGpG. Cannot use cyclic AMP or cyclic GMP. Part of the RocSAR two-component regulatory signaling system (also known as the SadARS system), which regulates biofilm maturation, type III secretion and expression of the cup fimbrial-gene cluster. Negatively regulates the expression of cup genes by antagonizing the activity of RocA1. In Pseudomonas aeruginosa (strain ATCC 15692 / DSM 22644 / CIP 104116 / JCM 14847 / LMG 12228 / 1C / PRS 101 / PAO1), this protein is Cyclic di-GMP phosphodiesterase RocR.